We begin with the raw amino-acid sequence, 366 residues long: Methyltransferase calH (366 aa).

Residues T189, D216, and 245-246 each bind S-adenosyl-L-methionine; that span reads NA.

It belongs to the class I-like SAM-binding methyltransferase superfamily.

Its pathway is secondary metabolite biosynthesis. Functionally, methyltransferase; part of the gene cluster that mediates the biosynthesis of calbistrin A and related compounds. Calbistrin A is a secondary metabolite with an interesting structure that was recently found to have bioactivity against leukemia cells. It consists of two polyketides linked by an ester bond: a bicyclic decalin containing polyketide and a linear 12 carbon dioic acid structure. The polyketide synthase calA is probably responsible for forming the decalin moiety. Because calA lacks a designated enoylreductase (ER) domain, the required activity is provided by the trans-enoyl reductase calK. Following release from the PKS, calF then probably catalyzes the oxidation and the subsequent Diels Alder cycloisomerization that lead to the formation of the decalin moiety. The decalin polyketide backbone includes two C-methyl groups, at C7 and C11 in backbone, of which the C7 position is probably methylated by the methyltransferase domain of calA. A candidate for adding the methyl group at C11, if not done by CalA, is the cluster methyltransferase calH. Several additional tailoring enzymes within the cluster could be involved in the modification of the decalin polyketide product. Those include the 3 cytochrome P450 monooxygenases CalE, CalG and CalL, of which one might be responsible for the introduction of the extra hydroxyl group attached to the backbone of the decalin moiety, at position C9 in the backbone, that allows for attachment of the linear moiety. One tailoring enzyme activity that is expected to be involved in biosynthesis of calbistrin is an acyltransferase for connecting the two polyketide synthase products, and which could be performed by the cluster acyltransferase calJ. The enzyme responsible for the biosynthesis of the linear moiety, probably a second PKS, has not been identified yet. The polypeptide is Methyltransferase calH (Penicillium decumbens).